Consider the following 474-residue polypeptide: PTS system N-acetylmuramic acid-specific EIIBC component (474 aa).

Residues 1–89 enclose the PTS EIIB type-1 domain; it reads MAKEISSELL…SELLGEAPVQ (89 aa). Residues 1–123 are Cytoplasmic-facing; sequence MAKEISSELL…LAKFATIFTP (123 aa). The active-site Phosphocysteine intermediate; for EIIB activity is the C29. The PTS EIIC type-1 domain maps to 115–474; it reads AKFATIFTPL…LFGCRNVNLD (360 aa). Residues 124–144 form a helical membrane-spanning segment; sequence LIPGFIAAGLLLGIATLIATV. Residues 145-157 lie on the Periplasmic side of the membrane; the sequence is MHVPADAQGTLPD. A helical transmembrane segment spans residues 158–178; that stretch reads ALNFMKVFSKGLFTFLVILVG. Topologically, residues 179–180 are cytoplasmic; it reads YN. A helical membrane pass occupies residues 181-201; that stretch reads AAQAFGGTGVNGAIIAALFLL. Topologically, residues 202 to 217 are periplasmic; sequence GYNPAATTGYYAGFHD. The helical transmembrane segment at 218–238 threads the bilayer; it reads FFGLPIDPRGNIIGVLIAAWA. Residues 239–260 lie on the Cytoplasmic side of the membrane; sequence CARIEGMVRRFMPDDLDMLLTS. The helical transmembrane segment at 261 to 281 threads the bilayer; the sequence is LITLLITATLAYLIIMPLGGW. Residues 282–301 lie on the Periplasmic side of the membrane; it reads LFEGMSWLFMHLNSNPLGCA. A helical transmembrane segment spans residues 302–322; it reads VLAGLFLIAVVFGVHQGFIPV. The Cytoplasmic portion of the chain corresponds to 323–334; it reads YLALMDSQGFNS. A helical membrane pass occupies residues 335–355; it reads LFPILSMAGAGQVGAALALYW. Residues 356–368 are Periplasmic-facing; sequence RAQPHSALRSQVR. A helical membrane pass occupies residues 369-389; that stretch reads GAIIPGLLGVGEPLIYGVTLP. Residues 390–393 lie on the Cytoplasmic side of the membrane; that stretch reads RMKP. Residues 394 to 414 form a helical membrane-spanning segment; it reads FITACLGGAAGGLFIGLIAWW. The Periplasmic portion of the chain corresponds to 415-440; that stretch reads GLPMGLNSAFGPSGLVALPLMTSAQG. The chain crosses the membrane as a helical span at residues 441 to 461; sequence ILPAMAVYAGGILVAWVCGFI. Residues 462–474 are Cytoplasmic-facing; the sequence is FTTLFGCRNVNLD.

The protein resides in the cell inner membrane. It catalyses the reaction N-acetyl-beta-D-muramate(out) + N(pros)-phospho-L-histidyl-[protein] = N-acetyl-beta-D-muramate 6-phosphate(in) + L-histidyl-[protein]. The phosphoenolpyruvate-dependent sugar phosphotransferase system (sugar PTS), a major carbohydrate active transport system, catalyzes the phosphorylation of incoming sugar substrates concomitantly with their translocation across the cell membrane. This system is involved in N-acetylmuramic acid (MurNAc) transport, yielding cytoplasmic MurNAc-6-P. Is also able to take up anhydro-N-acetylmuramic acid (anhMurNAc), but cannot phosphorylate the carbon 6, probably because of the 1,6-anhydro ring. This Escherichia coli O157:H7 protein is PTS system N-acetylmuramic acid-specific EIIBC component (murP).